A 288-amino-acid polypeptide reads, in one-letter code: MDKIIKSISKNGHFRAFALDSTLTVREAQERHQTWPTSTVALGRTLIAAQVLGANEKGDTKITVKVLGDGAMGPIIAVADSKGHVKGYVKNRELDYKKASTGEVLVAPFVGNGFLVVVKDMGLKQPYSGQVDLITGEIGEDLAWYFLSSEQTPSSVGVNVLLNEDSDTVKIAGGFMLQALPDATDEEITEIEHNIKSMPSIATMLTSDEPLKTMLDNIYGDMEYKNLGEFPLAFKCDCSKERFLEGIKSLGREPIEEMIAEDHGAEIICQFCENKYEYSEEELKALIN.

Intrachain disulfides connect C236–C238 and C269–C272.

The protein belongs to the HSP33 family. Under oxidizing conditions two disulfide bonds are formed involving the reactive cysteines. Under reducing conditions zinc is bound to the reactive cysteines and the protein is inactive.

The protein localises to the cytoplasm. Its function is as follows. Redox regulated molecular chaperone. Protects both thermally unfolding and oxidatively damaged proteins from irreversible aggregation. Plays an important role in the bacterial defense system toward oxidative stress. This Lactococcus lactis subsp. cremoris (strain SK11) protein is 33 kDa chaperonin.